The chain runs to 626 residues: UPF0313 protein MM_1287 (626 aa).

The interval 206-227 is disordered; the sequence is GKGKEKAGEQDESENATEEVAK. Positions 320–589 constitute a Radical SAM core domain; it reads ALEMVKFSLT…AMQRALMHYR (270 aa). 3 residues coordinate [4Fe-4S] cluster: Cys334, Cys338, and Cys341.

This sequence belongs to the UPF0313 family. Requires [4Fe-4S] cluster as cofactor.

The sequence is that of UPF0313 protein MM_1287 from Methanosarcina mazei (strain ATCC BAA-159 / DSM 3647 / Goe1 / Go1 / JCM 11833 / OCM 88) (Methanosarcina frisia).